Here is a 232-residue protein sequence, read N- to C-terminus: Large ribosomal subunit protein uL1 (232 aa).

It belongs to the universal ribosomal protein uL1 family. As to quaternary structure, part of the 50S ribosomal subunit.

Functionally, binds directly to 23S rRNA. The L1 stalk is quite mobile in the ribosome, and is involved in E site tRNA release. Its function is as follows. Protein L1 is also a translational repressor protein, it controls the translation of the L11 operon by binding to its mRNA. The protein is Large ribosomal subunit protein uL1 of Amoebophilus asiaticus (strain 5a2).